Reading from the N-terminus, the 192-residue chain is T-cell surface glycoprotein CD3 epsilon chain (192 aa).

Residues 1–21 (MQTGNLWQVLGLCLLLVGAWA) form the signal peptide. Topologically, residues 22-111 (QDDTEQNPYE…RVCKNCMEVN (90 aa)) are extracellular. Residues 27 to 98 (QNPYEVSISG…GNTEAAHTLY (72 aa)) form the Ig-like domain. The cysteines at positions 43 and 84 are disulfide-linked. A helical membrane pass occupies residues 112–137 (LLEVATIIVVDICVTLGLLLLVYYWS). Residues 138–192 (KSRKAKATPMTRGAGAGGRPRGQNRERPPPVPNPDYEPIRKGQRDLYSGLNQRGV) lie on the Cytoplasmic side of the membrane. The tract at residues 146–192 (PMTRGAGAGGRPRGQNRERPPPVPNPDYEPIRKGQRDLYSGLNQRGV) is disordered. The tract at residues 160–177 (QNRERPPPVPNPDYEPIR) is NUMB-binding region. The ITAM domain occupies 163–190 (ERPPPVPNPDYEPIRKGQRDLYSGLNQR). Positions 164 to 171 (RPPPVPNP) are proline-rich sequence. Phosphotyrosine is present on residues Tyr173 and Tyr184.

The TCR-CD3 complex is composed of a CD3D/CD3E and a CD3G/CD3E heterodimers that preferentially associate with TCRalpha and TCRbeta, respectively, to form TCRalpha/CD3E/CD3G and TCRbeta/CD3G/CD3E trimers. In turn, the hexamer interacts with CD3Z homodimer to form the TCR-CD3 complex. Alternatively, TCRalpha and TCRbeta can be replaced by TCRgamma and TCRdelta. Interacts with CD6. Interacts (via Proline-rich sequence) with NCK1; the interaction is ligand dependent but independent of tyrosine kinase activation. Phosphorylated on Tyr residues after T-cell receptor triggering by LCK in association with CD4/CD8.

It localises to the cell membrane. Part of the TCR-CD3 complex present on T-lymphocyte cell surface that plays an essential role in adaptive immune response. When antigen presenting cells (APCs) activate T-cell receptor (TCR), TCR-mediated signals are transmitted across the cell membrane by the CD3 chains CD3D, CD3E, CD3G and CD3Z. All CD3 chains contain immunoreceptor tyrosine-based activation motifs (ITAMs) in their cytoplasmic domain. Upon TCR engagement, these motifs become phosphorylated by Src family protein tyrosine kinases LCK and FYN, resulting in the activation of downstream signaling pathways. In addition of this role of signal transduction in T-cell activation, CD3E plays an essential role in correct T-cell development. Also participates in internalization and cell surface down-regulation of TCR-CD3 complexes via endocytosis sequences present in CD3E cytosolic region. In addition to its role as a TCR coreceptor, it serves as a receptor for ITPRIPL1. Ligand recognition inhibits T-cell activation by promoting interaction with NCK1, which prevents CD3E-ZAP70 interaction and blocks the ERK-NFkB signaling cascade and calcium influx. The chain is T-cell surface glycoprotein CD3 epsilon chain (CD3E) from Ovis aries (Sheep).